The following is a 334-amino-acid chain: Holliday junction branch migration complex subunit RuvB (334 aa).

Residues glutamate 4–tyrosine 184 are large ATPase domain (RuvB-L). ATP contacts are provided by residues isoleucine 23, arginine 24, glycine 65, lysine 68, threonine 69, threonine 70, glutamate 131–tyrosine 133, arginine 174, tyrosine 184, and arginine 221. Threonine 69 serves as a coordination point for Mg(2+). Residues aspartate 185–glutamate 255 are small ATPAse domain (RuvB-S). The segment at asparagine 258–glutamine 334 is head domain (RuvB-H). The DNA site is built by arginine 313 and arginine 318.

The protein belongs to the RuvB family. As to quaternary structure, homohexamer. Forms an RuvA(8)-RuvB(12)-Holliday junction (HJ) complex. HJ DNA is sandwiched between 2 RuvA tetramers; dsDNA enters through RuvA and exits via RuvB. An RuvB hexamer assembles on each DNA strand where it exits the tetramer. Each RuvB hexamer is contacted by two RuvA subunits (via domain III) on 2 adjacent RuvB subunits; this complex drives branch migration. In the full resolvosome a probable DNA-RuvA(4)-RuvB(12)-RuvC(2) complex forms which resolves the HJ.

It is found in the cytoplasm. It catalyses the reaction ATP + H2O = ADP + phosphate + H(+). Functionally, the RuvA-RuvB-RuvC complex processes Holliday junction (HJ) DNA during genetic recombination and DNA repair, while the RuvA-RuvB complex plays an important role in the rescue of blocked DNA replication forks via replication fork reversal (RFR). RuvA specifically binds to HJ cruciform DNA, conferring on it an open structure. The RuvB hexamer acts as an ATP-dependent pump, pulling dsDNA into and through the RuvAB complex. RuvB forms 2 homohexamers on either side of HJ DNA bound by 1 or 2 RuvA tetramers; 4 subunits per hexamer contact DNA at a time. Coordinated motions by a converter formed by DNA-disengaged RuvB subunits stimulates ATP hydrolysis and nucleotide exchange. Immobilization of the converter enables RuvB to convert the ATP-contained energy into a lever motion, pulling 2 nucleotides of DNA out of the RuvA tetramer per ATP hydrolyzed, thus driving DNA branch migration. The RuvB motors rotate together with the DNA substrate, which together with the progressing nucleotide cycle form the mechanistic basis for DNA recombination by continuous HJ branch migration. Branch migration allows RuvC to scan DNA until it finds its consensus sequence, where it cleaves and resolves cruciform DNA. In Psychromonas ingrahamii (strain DSM 17664 / CCUG 51855 / 37), this protein is Holliday junction branch migration complex subunit RuvB.